Reading from the N-terminus, the 124-residue chain is Small ribosomal subunit protein uS12 (124 aa).

Residue Asp89 is modified to 3-methylthioaspartic acid.

This sequence belongs to the universal ribosomal protein uS12 family. In terms of assembly, part of the 30S ribosomal subunit. Contacts proteins S8 and S17. May interact with IF1 in the 30S initiation complex.

With S4 and S5 plays an important role in translational accuracy. In terms of biological role, interacts with and stabilizes bases of the 16S rRNA that are involved in tRNA selection in the A site and with the mRNA backbone. Located at the interface of the 30S and 50S subunits, it traverses the body of the 30S subunit contacting proteins on the other side and probably holding the rRNA structure together. The combined cluster of proteins S8, S12 and S17 appears to hold together the shoulder and platform of the 30S subunit. The polypeptide is Small ribosomal subunit protein uS12 (Acinetobacter baumannii (strain AB307-0294)).